We begin with the raw amino-acid sequence, 164 residues long: SsrA-binding protein (164 aa).

Belongs to the SmpB family.

The protein localises to the cytoplasm. Required for rescue of stalled ribosomes mediated by trans-translation. Binds to transfer-messenger RNA (tmRNA), required for stable association of tmRNA with ribosomes. tmRNA and SmpB together mimic tRNA shape, replacing the anticodon stem-loop with SmpB. tmRNA is encoded by the ssrA gene; the 2 termini fold to resemble tRNA(Ala) and it encodes a 'tag peptide', a short internal open reading frame. During trans-translation Ala-aminoacylated tmRNA acts like a tRNA, entering the A-site of stalled ribosomes, displacing the stalled mRNA. The ribosome then switches to translate the ORF on the tmRNA; the nascent peptide is terminated with the 'tag peptide' encoded by the tmRNA and targeted for degradation. The ribosome is freed to recommence translation, which seems to be the essential function of trans-translation. The protein is SsrA-binding protein of Shewanella sediminis (strain HAW-EB3).